Consider the following 343-residue polypeptide: Uroporphyrinogen decarboxylase (343 aa).

Residues 23–27 (RQAGR), Asp73, Tyr150, Ser205, and His322 contribute to the substrate site.

Belongs to the uroporphyrinogen decarboxylase family. In terms of assembly, homodimer.

The protein localises to the cytoplasm. It carries out the reaction uroporphyrinogen III + 4 H(+) = coproporphyrinogen III + 4 CO2. Its pathway is porphyrin-containing compound metabolism; protoporphyrin-IX biosynthesis; coproporphyrinogen-III from 5-aminolevulinate: step 4/4. Functionally, catalyzes the decarboxylation of four acetate groups of uroporphyrinogen-III to yield coproporphyrinogen-III. The sequence is that of Uroporphyrinogen decarboxylase from Cereibacter sphaeroides (strain ATCC 17025 / ATH 2.4.3) (Rhodobacter sphaeroides).